The primary structure comprises 115 residues: Large ribosomal subunit protein bL20c (115 aa).

The protein belongs to the bacterial ribosomal protein bL20 family.

It localises to the plastid. The protein localises to the chloroplast. In terms of biological role, binds directly to 23S ribosomal RNA and is necessary for the in vitro assembly process of the 50S ribosomal subunit. It is not involved in the protein synthesizing functions of that subunit. This is Large ribosomal subunit protein bL20c (rpl20) from Chlorella vulgaris (Green alga).